Reading from the N-terminus, the 360-residue chain is Peptide chain release factor 1 (360 aa).

At Q237 the chain carries N5-methylglutamine.

Belongs to the prokaryotic/mitochondrial release factor family. Post-translationally, methylated by PrmC. Methylation increases the termination efficiency of RF1.

The protein resides in the cytoplasm. Peptide chain release factor 1 directs the termination of translation in response to the peptide chain termination codons UAG and UAA. The protein is Peptide chain release factor 1 of Pseudomonas fluorescens (strain SBW25).